The primary structure comprises 523 residues: Protein tweety homolog 3 (523 aa).

Over 1 to 42 (MAGVSYAAPWWVSLLHRLPHFDLSWEATSSQFRPEDTDYQQA) the chain is Extracellular. A helical membrane pass occupies residues 43 to 63 (LLLLGAAALACLALDLLFLLF). The Cytoplasmic segment spans residues 64–86 (YSFWLCCRRRKSEEHLDADCCCT). The helical transmembrane segment at 87-107 (AWCVIIATLVCSAGIAVGFYG) threads the bilayer. Over 108-211 (NGETSDGIHR…VDLYDWYRWL (104 aa)) the chain is Extracellular. Residues Glu110 and Asp113 each contribute to the Ca(2+) site. 2 N-linked (GlcNAc...) asparagine glycosylation sites follow: Asn126 and Asn144. Residues 212-232 (GYLGLLLLDVIICLLVLVGLI) form a helical membrane-spanning segment. The Cytoplasmic segment spans residues 233–236 (RSSK). A helical transmembrane segment spans residues 237 to 257 (GILVGVCLLGVLALVISWGAL). Residues 258–386 (GLELAVSVGS…LTGFCYDGVE (129 aa)) are Extracellular-facing. Disulfide bonds link Cys271/Cys381 and Cys299/Cys366. N-linked (GlcNAc...) asparagine glycosylation occurs at Asn351. Residues 387 to 407 (GLIYLALFSFVTALMFSSIVC) traverse the membrane as a helical segment. At 408–523 (SVPHTWQQKR…QPRPDSSGSH (116 aa)) the chain is on the cytoplasmic side. Disordered regions lie at residues 413-435 (WQQK…RQAH) and 482-523 (QNPR…SGSH). Residue Ser496 is modified to Phosphoserine. The PY-motif; mediates interaction with NEDD4L motif lies at 498–501 (PPSY). Positions 501–523 (YTSSMRAKYLATSQPRPDSSGSH) are enriched in polar residues. Phosphoserine is present on residues Ser504 and Ser522.

The protein belongs to the tweety family. In terms of assembly, homotetramer; disulfide-linked. Homodimer. Interacts with NEDD4L. Ubiquitinated by NEDD4L. In terms of processing, N-Glycosylated. Contains high-mannose, hybrid and complex oligosaccharides. In terms of tissue distribution, expressed in excitable tissues. Expressed in the brain, heart, skeletal muscle, colon, spleen, kidney and peripheral blood leukocytes.

Its subcellular location is the cell membrane. The enzyme catalyses chloride(in) = chloride(out). It carries out the reaction L-glutamate(out) = L-glutamate(in). In terms of biological role, calcium-independent, swelling-dependent volume-regulated anion channel (VRAC-swell) which plays a pivotal role in the process of regulatory volume decrease (RVD) in the brain through the efflux of anions like chloride and organic osmolytes like glutamate. Probable large-conductance Ca(2+)-activated chloride channel. This chain is Protein tweety homolog 3 (TTYH3), found in Homo sapiens (Human).